Consider the following 345-residue polypeptide: Protein CHROMOSOME TRANSMISSION FIDELITY 7 (345 aa).

The CCHH-type zinc-finger motif lies at R96–H120.

This sequence belongs to the acetyltransferase family. ECO subfamily. Autoacetylated. In terms of tissue distribution, expressed in roots, stems, leaves, young seedlings and flower buds. Detected in the embryo, but not in the endosperm.

Its subcellular location is the nucleus. It is found in the cytoplasm. In terms of biological role, acetyltransferase required for the establishment of sister chromatid cohesion. Involved in preservation of genome integrity and meiosis. Required for DNA repair and for the regulation of chromosome segregation during mitotic cell division. Knock-down mutants are extremely dwarf. Regulator of sister chromatid cohesion in meiosis which negatively regulates cohesin association with chromatin, acting as an antagonist of WAPL1 and WAPL2. The sequence is that of Protein CHROMOSOME TRANSMISSION FIDELITY 7 from Arabidopsis thaliana (Mouse-ear cress).